The chain runs to 408 residues: LL-diaminopimelate aminotransferase (408 aa).

Residues Tyr15 and Gly42 each contribute to the substrate site. Pyridoxal 5'-phosphate is bound by residues Tyr72, 108–109 (SK), Tyr132, Asn187, Tyr218, and 246–248 (SFS). Substrate contacts are provided by Lys109, Tyr132, and Asn187. Position 249 is an N6-(pyridoxal phosphate)lysine (Lys249). Residues Arg257 and Asn292 each contribute to the pyridoxal 5'-phosphate site. Substrate-binding residues include Asn292 and Arg388.

It belongs to the class-I pyridoxal-phosphate-dependent aminotransferase family. LL-diaminopimelate aminotransferase subfamily. Homodimer. Pyridoxal 5'-phosphate serves as cofactor.

It catalyses the reaction (2S,6S)-2,6-diaminopimelate + 2-oxoglutarate = (S)-2,3,4,5-tetrahydrodipicolinate + L-glutamate + H2O + H(+). Its pathway is amino-acid biosynthesis; L-lysine biosynthesis via DAP pathway; LL-2,6-diaminopimelate from (S)-tetrahydrodipicolinate (aminotransferase route): step 1/1. Involved in the synthesis of meso-diaminopimelate (m-DAP or DL-DAP), required for both lysine and peptidoglycan biosynthesis. Catalyzes the direct conversion of tetrahydrodipicolinate to LL-diaminopimelate. The protein is LL-diaminopimelate aminotransferase of Prochlorococcus marinus subsp. pastoris (strain CCMP1986 / NIES-2087 / MED4).